The primary structure comprises 405 residues: Protochlorophyllide reductase A, chloroplastic (405 aa).

Residues methionine 1 to alanine 69 constitute a chloroplast transit peptide.

Belongs to the short-chain dehydrogenases/reductases (SDR) family. POR subfamily. Forms large complexes including TOC33, pPORA and OEP161 during pPORA import into plastids at the plastid envelope membrane. Interacts with CPP1 during plastid import. In terms of tissue distribution, expressed in young seedlings. Not detected in leaves.

The protein localises to the plastid. The protein resides in the chloroplast. It catalyses the reaction chlorophyllide a + NADP(+) = protochlorophyllide a + NADPH + H(+). The protein operates within porphyrin-containing compound metabolism; chlorophyll biosynthesis. Phototransformation of protochlorophyllide (Pchlide) to chlorophyllide (Chlide). PORA may also function as a photoprotectant during the transitory stage from dark to light. Functions in skotomorphogenesis, photomorphogenesis and throughout the plant life under specific light conditions. This chain is Protochlorophyllide reductase A, chloroplastic (PORA), found in Arabidopsis thaliana (Mouse-ear cress).